The following is a 200-amino-acid chain: BREX protein BrxA (200 aa).

It belongs to the BrxA family.

Functionally, BREX systems (bacteriophage exclusion) provide immunity against bacteriophage. Part of a type 1 BREX system. This system allows phage adsorption but prevents phage DNA replication, without degradation of the phage DNA. Methylation of bacterial DNA by PglX probably guides self/non-self discrimination. When the brxA-brxB-brxC-pglX and pglZ-brxL operons are transformed into a susceptible B.subtilis strain (BEST7003) they confer resistance to bacteriophages SPbeta, SP16, Zeta, phi3T and SP02 and partial protection to phages SP01 and SP82G (these include lytic and temperate phage). They do not protect against phages phi105, rho10 or rho14. Additionally confers a very slight reduction in efficiency of plasmid transformation. The polypeptide is BREX protein BrxA (Bacillus cereus (strain H3081.97)).